The following is a 106-amino-acid chain: Large ribosomal subunit protein uL24 (106 aa).

Belongs to the universal ribosomal protein uL24 family. As to quaternary structure, part of the 50S ribosomal subunit.

In terms of biological role, one of two assembly initiator proteins, it binds directly to the 5'-end of the 23S rRNA, where it nucleates assembly of the 50S subunit. Its function is as follows. One of the proteins that surrounds the polypeptide exit tunnel on the outside of the subunit. This is Large ribosomal subunit protein uL24 from Orientia tsutsugamushi (strain Boryong) (Rickettsia tsutsugamushi).